The following is a 345-amino-acid chain: Biotin synthase (345 aa).

One can recognise a Radical SAM core domain in the interval 39–266 (NEVQVSTLLS…ASHVRLSAGR (228 aa)). [4Fe-4S] cluster-binding residues include Cys54, Cys58, and Cys61. Residues Cys98, Cys129, Cys189, and Arg261 each coordinate [2Fe-2S] cluster.

The protein belongs to the radical SAM superfamily. Biotin synthase family. In terms of assembly, homodimer. The cofactor is [4Fe-4S] cluster. Requires [2Fe-2S] cluster as cofactor.

The catalysed reaction is (4R,5S)-dethiobiotin + (sulfur carrier)-SH + 2 reduced [2Fe-2S]-[ferredoxin] + 2 S-adenosyl-L-methionine = (sulfur carrier)-H + biotin + 2 5'-deoxyadenosine + 2 L-methionine + 2 oxidized [2Fe-2S]-[ferredoxin]. Its pathway is cofactor biosynthesis; biotin biosynthesis; biotin from 7,8-diaminononanoate: step 2/2. Functionally, catalyzes the conversion of dethiobiotin (DTB) to biotin by the insertion of a sulfur atom into dethiobiotin via a radical-based mechanism. The sequence is that of Biotin synthase from Idiomarina loihiensis (strain ATCC BAA-735 / DSM 15497 / L2-TR).